The sequence spans 311 residues: Phosphoribosylaminoimidazole-succinocarboxamide synthase (311 aa).

Belongs to the SAICAR synthetase family.

The catalysed reaction is 5-amino-1-(5-phospho-D-ribosyl)imidazole-4-carboxylate + L-aspartate + ATP = (2S)-2-[5-amino-1-(5-phospho-beta-D-ribosyl)imidazole-4-carboxamido]succinate + ADP + phosphate + 2 H(+). It functions in the pathway purine metabolism; IMP biosynthesis via de novo pathway; 5-amino-1-(5-phospho-D-ribosyl)imidazole-4-carboxamide from 5-amino-1-(5-phospho-D-ribosyl)imidazole-4-carboxylate: step 1/2. This Aromatoleum aromaticum (strain DSM 19018 / LMG 30748 / EbN1) (Azoarcus sp. (strain EbN1)) protein is Phosphoribosylaminoimidazole-succinocarboxamide synthase.